A 613-amino-acid polypeptide reads, in one-letter code: Potassium voltage-gated channel subfamily A member 5 (613 aa).

The tract at residues 1–108 is disordered; that stretch reads MEIALVPLEN…EGDPGLGTVE (108 aa). The tract at residues 1-211 is tetramerization domain; sequence MEIALVPLEN…FYQLGDEAME (211 aa). Residues 1–247 lie on the Cytoplasmic side of the membrane; that stretch reads MEIALVPLEN…LIFEYPESSG (247 aa). Residues 45-62 are compositionally biased toward basic and acidic residues; it reads GPKEPAPKGRGAQRDADS. Repeat copies occupy residues 61–71 and 72–82. Positions 61–82 are 2 X 11 AA tandem repeat of D-[SP]-G-V-R-P-L-P-P-L-P; sequence DSGVRPLPPLPDPGVRPLPPLP. A compositionally biased stretch (pro residues) spans 66-83; the sequence is PLPPLPDPGVRPLPPLPE. A compositionally biased stretch (basic and acidic residues) spans 84 to 93; it reads ELPRPRRPPP. Residue Lys221 forms a Glycyl lysine isopeptide (Lys-Gly) (interchain with G-Cter in SUMO) linkage. Residues 248-269 traverse the membrane as a helical segment; the sequence is SARAIAIVSVLVILISIITFCL. Residues 270-323 lie on the Extracellular side of the membrane; the sequence is ETLPEFRDERELLRHPPAPHQPPAPAPGANGSGVMAPPSGPTVAPLLPRTLADP. The interval 282 to 304 is disordered; the sequence is LRHPPAPHQPPAPAPGANGSGVM. Over residues 285 to 295 the composition is skewed to pro residues; sequence PPAPHQPPAPA. Residues 324 to 345 traverse the membrane as a helical segment; the sequence is FFIVETTCVIWFTFELLVRFFA. Residue Cys346 is the site of S-palmitoyl cysteine attachment. Residues 346 to 356 lie on the Cytoplasmic side of the membrane; sequence CPSKAGFSRNI. The helical transmembrane segment at 357–377 threads the bilayer; the sequence is MNIIDVVAIFPYFITLGTELA. At 378–395 the chain is on the extracellular side; the sequence is EQQPGGGGGGQNGQQAMS. A helical; Voltage-sensor transmembrane segment spans residues 396–416; it reads LAILRVIRLVRVFRIFKLSRH. At 417–431 the chain is on the cytoplasmic side; that stretch reads SKGLQILGKTLQASM. The S4-S5 linker stretch occupies residues 418–431; the sequence is KGLQILGKTLQASM. Residues 432–453 form a helical membrane-spanning segment; the sequence is RELGLLIFFLFIGVILFSSAVY. At 454 to 467 the chain is on the extracellular side; that stretch reads FAEADNQGTHFSSI. The segment at residues 468-479 is an intramembrane region (helical); sequence PDAFWWAVVTMT. A Selectivity filter motif is present at residues 480–485; the sequence is TVGYGD. An intramembrane segment occupies 480 to 487; it reads TVGYGDMR. Over 488–494 the chain is Extracellular; sequence PITVGGK. The chain crosses the membrane as a helical span at residues 495-523; it reads IVGSLCAIAGVLTIALPVPVIVSNFNYFY. Residues 524–613 are Cytoplasmic-facing; sequence HRETDHEEPA…CLDTSRETDL (90 aa). Residues 532–559 are disordered; that stretch reads PAVLKEEQGTQSQGPGLDRGVQRKVSGS. Lys536 is covalently cross-linked (Glycyl lysine isopeptide (Lys-Gly) (interchain with G-Cter in SUMO)). Phosphoserine; by PKA is present on Ser557. The PDZ-binding signature appears at 611 to 613; the sequence is TDL.

It belongs to the potassium channel family. A (Shaker) (TC 1.A.1.2) subfamily. Kv1.5/KCNA5 sub-subfamily. In terms of assembly, homotetramer and heterotetramer of potassium channel proteins. Interacts with DLG1, which enhances channel currents. Forms a ternary complex with DLG1 and CAV3. Interacts with KCNAB1. Interacts with UBE2I. Interacts with XIRP2; the interaction is required for normal action potential configuration in the heart. Glycosylated. Post-translationally, sumoylated on Lys-221, and Lys-536, preferentially with SUMO3. Sumoylation regulates the voltage sensitivity of the channel. In terms of tissue distribution, pancreatic islets and insulinoma.

Its subcellular location is the cell membrane. It carries out the reaction K(+)(in) = K(+)(out). With respect to regulation, inhibited by 4-aminopyridine, nicotine, bepridil, correolide, and endothelin-1. Its function is as follows. Voltage-gated potassium channel that mediates transmembrane potassium transport in excitable membranes. Forms tetrameric potassium-selective channels through which potassium ions pass in accordance with their electrochemical gradient. The channel alternates between opened and closed conformations in response to the voltage difference across the membrane. Can form functional homotetrameric channels and heterotetrameric channels that contain variable proportions of KCNA1, KCNA2, KCNA4, KCNA5, and possibly other family members as well; channel properties depend on the type of alpha subunits that are part of the channel. Channel properties are modulated by cytoplasmic beta subunits that regulate the subcellular location of the alpha subunits and promote rapid inactivation. Homotetrameric channels display rapid activation and slow inactivation. Required for normal electrical conduction including formation of the infranodal ventricular conduction system and normal action potential configuration, as a result of its interaction with XIRP2. May play a role in regulating the secretion of insulin in normal pancreatic islets. Exhibits a faster depolarization rate, reduced voltage-dependent recovery from inactivation and an excessive cumulative inactivation. This is Potassium voltage-gated channel subfamily A member 5 (KCNA5) from Homo sapiens (Human).